Reading from the N-terminus, the 68-residue chain is ATP synthase F(0) complex subunit 8 (68 aa).

The chain crosses the membrane as a helical span at residues 8–24 (VWPTMIAPMLLTLFLIT). Position 54 is an N6-acetyllysine; alternate (K54). K54 carries the N6-succinyllysine; alternate modification. The residue at position 57 (K57) is an N6-acetyllysine.

Belongs to the ATPase protein 8 family. In terms of assembly, component of the ATP synthase complex composed at least of ATP5F1A/subunit alpha, ATP5F1B/subunit beta, ATP5MC1/subunit c (homooctomer), MT-ATP6/subunit a, MT-ATP8/subunit 8, ATP5ME/subunit e, ATP5MF/subunit f, ATP5MG/subunit g, ATP5MK/subunit k, ATP5MJ/subunit j, ATP5F1C/subunit gamma, ATP5F1D/subunit delta, ATP5F1E/subunit epsilon, ATP5PF/subunit F6, ATP5PB/subunit b, ATP5PD/subunit d, ATP5PO/subunit OSCP. ATP synthase complex consists of a soluble F(1) head domain (subunits alpha(3) and beta(3)) - the catalytic core - and a membrane F(0) domain - the membrane proton channel (subunits c, a, 8, e, f, g, k and j). These two domains are linked by a central stalk (subunits gamma, delta, and epsilon) rotating inside the F1 region and a stationary peripheral stalk (subunits F6, b, d, and OSCP). Interacts with PRICKLE3.

Its subcellular location is the mitochondrion membrane. In terms of biological role, subunit 8, of the mitochondrial membrane ATP synthase complex (F(1)F(0) ATP synthase or Complex V) that produces ATP from ADP in the presence of a proton gradient across the membrane which is generated by electron transport complexes of the respiratory chain. ATP synthase complex consist of a soluble F(1) head domain - the catalytic core - and a membrane F(1) domain - the membrane proton channel. These two domains are linked by a central stalk rotating inside the F(1) region and a stationary peripheral stalk. During catalysis, ATP synthesis in the catalytic domain of F(1) is coupled via a rotary mechanism of the central stalk subunits to proton translocation. In vivo, can only synthesize ATP although its ATP hydrolase activity can be activated artificially in vitro. Part of the complex F(0) domain. This is ATP synthase F(0) complex subunit 8 from Gorilla gorilla gorilla (Western lowland gorilla).